The following is a 443-amino-acid chain: tRNA-2-methylthio-N(6)-dimethylallyladenosine synthase (443 aa).

Residues 3–120 enclose the MTTase N-terminal domain; the sequence is SKLYIKTFGC…LPELIDARRR (118 aa). The [4Fe-4S] cluster site is built by Cys-12, Cys-49, Cys-83, Cys-157, Cys-161, and Cys-164. The Radical SAM core domain maps to 143–377; sequence RTTGATAFVS…KIQRNAQMIS (235 aa). The TRAM domain occupies 378 to 441; that stretch reads QSMVDTIQRV…SHTLRGEISD (64 aa).

It belongs to the methylthiotransferase family. MiaB subfamily. In terms of assembly, monomer. Requires [4Fe-4S] cluster as cofactor.

It localises to the cytoplasm. It carries out the reaction N(6)-dimethylallyladenosine(37) in tRNA + (sulfur carrier)-SH + AH2 + 2 S-adenosyl-L-methionine = 2-methylsulfanyl-N(6)-dimethylallyladenosine(37) in tRNA + (sulfur carrier)-H + 5'-deoxyadenosine + L-methionine + A + S-adenosyl-L-homocysteine + 2 H(+). Catalyzes the methylthiolation of N6-(dimethylallyl)adenosine (i(6)A), leading to the formation of 2-methylthio-N6-(dimethylallyl)adenosine (ms(2)i(6)A) at position 37 in tRNAs that read codons beginning with uridine. The polypeptide is tRNA-2-methylthio-N(6)-dimethylallyladenosine synthase (Nitrosomonas eutropha (strain DSM 101675 / C91 / Nm57)).